Here is a 249-residue protein sequence, read N- to C-terminus: Exosome complex component Rrp41 (249 aa).

The protein belongs to the RNase PH family. Rrp41 subfamily. As to quaternary structure, component of the archaeal exosome complex. Forms a hexameric ring-like arrangement composed of 3 Rrp41-Rrp42 heterodimers. The hexameric ring associates with a trimer of Rrp4 and/or Csl4 subunits.

The protein resides in the cytoplasm. In terms of biological role, catalytic component of the exosome, which is a complex involved in RNA degradation. Has 3'-&gt;5' exoribonuclease activity. Can also synthesize heteromeric RNA-tails. The polypeptide is Exosome complex component Rrp41 (Thermococcus kodakarensis (strain ATCC BAA-918 / JCM 12380 / KOD1) (Pyrococcus kodakaraensis (strain KOD1))).